A 151-amino-acid chain; its full sequence is UPF0208 membrane protein YfbV (151 aa).

A run of 2 helical transmembrane segments spans residues 46–65 (YAIR…QIAL) and 69–91 (LGPA…WWLG).

This sequence belongs to the UPF0208 family.

Its subcellular location is the cell inner membrane. The sequence is that of UPF0208 membrane protein YfbV from Salmonella choleraesuis (strain SC-B67).